Here is a 90-residue protein sequence, read N- to C-terminus: U7-theraphotoxin-Hhn1a 1 (90 aa).

The N-terminal stretch at 1–19 (MKTAIFTVVLALAVFAVLS) is a signal peptide. Residues 20–50 (FGWEANEKALSEEFTELIHEKEAASETEARE) constitute a propeptide that is removed on maturation. Disulfide bonds link Cys51–Cys65, Cys58–Cys70, and Cys64–Cys81.

Belongs to the neurotoxin 10 (Hwtx-1) family. 13 (Hntx-13) subfamily. As to expression, expressed by the venom gland.

It is found in the secreted. Ion channel inhibitor. This is U7-theraphotoxin-Hhn1a 1 from Cyriopagopus hainanus (Chinese bird spider).